Here is a 273-residue protein sequence, read N- to C-terminus: MAIHLSKTSSPSTRNGAVNSQVKSNSRNRLISGQHHCGKGRNPRGIITAGHRGGGHKRLYRKIDFRRNEKDIYGRIITIEYDPNRNAHICLIHYGDGEKRYILHPKAIIGDTIVYGTEVPIKMGNALPLTDMPLGTAIHNIEITLGKGGQLARAAGAVAKLIAKEGKSATLKLPSGEVRLISKNCSATVGQVGNVGVNQKSLGRVGAKRWRGKRPVVRGVVMNPVDHPHGGGEGRAPIGRKKPSTPWGYPALGRRTRKSNKYSDNLILRRRSK.

A compositionally biased stretch (polar residues) spans 1–31; the sequence is MAIHLSKTSSPSTRNGAVNSQVKSNSRNRLI. Disordered regions lie at residues 1–53 and 222–273; these read MAIH…GHRG and MNPV…RRSK.

Belongs to the universal ribosomal protein uL2 family. In terms of assembly, part of the 50S ribosomal subunit.

It localises to the plastid. Its subcellular location is the chloroplast. The sequence is that of Large ribosomal subunit protein uL2c (rpl2) from Pisum sativum (Garden pea).